Here is a 674-residue protein sequence, read N- to C-terminus: Penicillin-binding protein activator LpoA (674 aa).

The N-terminal stretch at M1–G31 is a signal peptide. C32 carries the N-palmitoyl cysteine lipid modification. The S-diacylglycerol cysteine moiety is linked to residue C32. Residues G291 to P349 are disordered. Low complexity predominate over residues V292–S315. A compositionally biased stretch (polar residues) spans T316 to A328. Residues A331–P349 are compositionally biased toward low complexity.

The protein belongs to the LpoA family. As to quaternary structure, interacts with PBP1a.

The protein localises to the cell outer membrane. Functionally, regulator of peptidoglycan synthesis that is essential for the function of penicillin-binding protein 1A (PBP1a). The sequence is that of Penicillin-binding protein activator LpoA from Serratia proteamaculans (strain 568).